Here is a 143-residue protein sequence, read N- to C-terminus: Hemoglobin cathodic subunit alpha (143 aa).

Residue S1 is modified to N-acetylserine. Residues 1–143 (SLAPGDKTVV…VCAALSDKYR (143 aa)) enclose the Globin domain. H59 is an O2 binding site. H89 contacts heme b.

It belongs to the globin family. In terms of assembly, heterotetramer of two alpha chains and two beta chains. Red blood cells.

Its function is as follows. Involved in oxygen transport from gills to the various peripheral tissues. In Gymnothorax unicolor (Brown moray), this protein is Hemoglobin cathodic subunit alpha.